A 421-amino-acid polypeptide reads, in one-letter code: General transcription factor IIH subunit 2 (421 aa).

Residues 1-26 are disordered; it reads MSNQRKRSNDEREEEDDEDAEGIGEW. The span at 11–24 shows a compositional bias: acidic residues; that stretch reads EREEEDDEDAEGIG. The VWFA domain occupies 83–272; the sequence is YLYIVIDFSR…IAEFAIANLI (190 aa). Residues 362-408 form an RING-type zinc finger; the sequence is CFGCQQSLIGAGNKPVPCVTCRKCKHYFCLDCDIYIHESLHNCPGCE.

This sequence belongs to the GTF2H2 family. Component of the 7-subunit TFIIH core complex composed of XPB, XPD, TFB1/GTF2H1, GTF2H2/P44, TFB4/GTF2H3, TFB2/GTF2H4 and TFB5/GTF2H5, which is active in NER. The core complex associates with the 3-subunit CDK-activating kinase (CAK) module composed of CYCH1/cyclin H1, CDKD and MAT1/At4g30820 to form the 10-subunit holoenzyme (holo-TFIIH) active in transcription. Interacts with XPD.

It localises to the nucleus. Component of the general transcription and DNA repair factor IIH (TFIIH) core complex, which is involved in general and transcription-coupled nucleotide excision repair (NER) of damaged DNA and, when complexed to CAK, in RNA transcription by RNA polymerase II. In NER, TFIIH acts by opening DNA around the lesion to allow the excision of the damaged oligonucleotide and its replacement by a new DNA fragment. In transcription, TFIIH has an essential role in transcription initiation. When the pre-initiation complex (PIC) has been established, TFIIH is required for promoter opening and promoter escape. Phosphorylation of the C-terminal tail (CTD) of the largest subunit of RNA polymerase II by the kinase module CAK controls the initiation of transcription. Can restore UV resistance in the NER-deficient ssl1-1 yeast mutant. This chain is General transcription factor IIH subunit 2, found in Arabidopsis thaliana (Mouse-ear cress).